Reading from the N-terminus, the 340-residue chain is Ketol-acid reductoisomerase (NADP(+)) (340 aa).

The region spanning 3–183 (LSVYYDKDCN…GGGRTGIIET (181 aa)) is the KARI N-terminal Rossmann domain. NADP(+)-binding positions include 26–29 (FGSQ), S54, and 84–87 (DELQ). H109 is a catalytic residue. Residue G135 coordinates NADP(+). Positions 184–329 (TFKDETETDL…ERLRAMMPWI (146 aa)) constitute a KARI C-terminal knotted domain. Residues D192, E196, E228, and E232 each coordinate Mg(2+). Residue S253 participates in substrate binding.

The protein belongs to the ketol-acid reductoisomerase family. The cofactor is Mg(2+).

It catalyses the reaction (2R)-2,3-dihydroxy-3-methylbutanoate + NADP(+) = (2S)-2-acetolactate + NADPH + H(+). The enzyme catalyses (2R,3R)-2,3-dihydroxy-3-methylpentanoate + NADP(+) = (S)-2-ethyl-2-hydroxy-3-oxobutanoate + NADPH + H(+). Its pathway is amino-acid biosynthesis; L-isoleucine biosynthesis; L-isoleucine from 2-oxobutanoate: step 2/4. It participates in amino-acid biosynthesis; L-valine biosynthesis; L-valine from pyruvate: step 2/4. Its function is as follows. Involved in the biosynthesis of branched-chain amino acids (BCAA). Catalyzes an alkyl-migration followed by a ketol-acid reduction of (S)-2-acetolactate (S2AL) to yield (R)-2,3-dihydroxy-isovalerate. In the isomerase reaction, S2AL is rearranged via a Mg-dependent methyl migration to produce 3-hydroxy-3-methyl-2-ketobutyrate (HMKB). In the reductase reaction, this 2-ketoacid undergoes a metal-dependent reduction by NADPH to yield (R)-2,3-dihydroxy-isovalerate. The sequence is that of Ketol-acid reductoisomerase (NADP(+)) from Wolinella succinogenes (strain ATCC 29543 / DSM 1740 / CCUG 13145 / JCM 31913 / LMG 7466 / NCTC 11488 / FDC 602W) (Vibrio succinogenes).